Consider the following 308-residue polypeptide: Taste receptor type 2 member 43 (308 aa).

A topological domain (extracellular) is located at residue Met-1. Residues 2 to 22 (ITFLPIIFSILVVVTFVIGNC) form a helical membrane-spanning segment. Residues 23–46 (ANGFIALVNSTEWVKRQKISFADQ) lie on the Cytoplasmic side of the membrane. A helical transmembrane segment spans residues 47 to 67 (ILTALAVSRVGLLWVLLLNWY). Topologically, residues 68-86 (ATVLNPAFYSVEVRTIVYN) are extracellular. A helical transmembrane segment spans residues 87–107 (LWAVINHFSNWLATSLSIFYL). Residues 108–126 (LKIANFSNLIFLHLKRRVK) are Cytoplasmic-facing. A helical transmembrane segment spans residues 127–147 (SVVLVILLGPLLFLVCHLFVV). Residues 148 to 178 (NMNEIVRTKEYEGNMTWKSKLRSAMYLSNTT) are Extracellular-facing. N-linked (GlcNAc...) asparagine glycans are attached at residues Asn-161 and Asn-176. A helical transmembrane segment spans residues 179–199 (VTILANLVPFILTLISFLLLI). Residues 200–229 (CSLCKHLKKMQLRDKGSQDPSTKVHIKALQ) are Cytoplasmic-facing. The chain crosses the membrane as a helical span at residues 230–249 (TVISLLLCVIYFLSIMISSW). The Extracellular segment spans residues 250–258 (SLGRVENKA). The helical transmembrane segment at 259–279 (VFMFCKAIRFSYPSAHAFILI) threads the bilayer. Residues 280 to 308 (WGNKKLKQTLLSVLWNVRYCVKGQKLPSP) lie on the Cytoplasmic side of the membrane.

Belongs to the G-protein coupled receptor T2R family.

It is found in the membrane. Its subcellular location is the cell projection. The protein localises to the cilium membrane. In terms of biological role, gustducin-coupled receptor immplicated in the perception of bitter compounds in the oral cavity and the gastrointestinal tract. Signals through PLCB2 and the calcium-regulated cation channel TRPM5. Activated by the sulfonyl amide sweeteners saccharin and acesulfame K. In airway epithelial cells, binding of bitter compounds increases the intracellular calcium ion concentration and stimulates ciliary beat frequency. May act as chemosensory receptors in airway epithelial cells to detect and eliminate potential noxious agents from the airways. The protein is Taste receptor type 2 member 43 (TAS2R43) of Papio hamadryas (Hamadryas baboon).